Reading from the N-terminus, the 465-residue chain is Glutamate--tRNA ligase (465 aa).

Residues 10-20 carry the 'HIGH' region motif; the sequence is PSPTGQLHIGG. 4 residues coordinate Zn(2+): Cys99, Cys101, Cys126, and Glu128. Residues 236–240 carry the 'KMSKS' region motif; the sequence is KLSKR. Lys239 is a binding site for ATP.

The protein belongs to the class-I aminoacyl-tRNA synthetase family. Glutamate--tRNA ligase type 1 subfamily. In terms of assembly, monomer. It depends on Zn(2+) as a cofactor.

It is found in the cytoplasm. The enzyme catalyses tRNA(Glu) + L-glutamate + ATP = L-glutamyl-tRNA(Glu) + AMP + diphosphate. Its function is as follows. Catalyzes the attachment of glutamate to tRNA(Glu) in a two-step reaction: glutamate is first activated by ATP to form Glu-AMP and then transferred to the acceptor end of tRNA(Glu). This is Glutamate--tRNA ligase from Lawsonia intracellularis (strain PHE/MN1-00).